Consider the following 85-residue polypeptide: uncharacterized protein (85 aa).

This is an uncharacterized protein from Escherichia coli (strain K12).